The primary structure comprises 414 residues: ORC1-type DNA replication protein 1 (414 aa).

ATP is bound by residues 70–74, tyrosine 213, and arginine 225; that span reads TGKTA.

This sequence belongs to the CDC6/cdc18 family.

In terms of biological role, involved in regulation of DNA replication. The protein is ORC1-type DNA replication protein 1 (cdc6-1) of Methanosarcina mazei (strain ATCC BAA-159 / DSM 3647 / Goe1 / Go1 / JCM 11833 / OCM 88) (Methanosarcina frisia).